Reading from the N-terminus, the 603-residue chain is MARPLRAARLPPPLLLLLAAGASLGAYAVGVDEPGPEGLTSTSLLDLLLPTDFEPLDSEEPSEAMGLDAGLAPGSGFPSEDSEESRLLQPPQYFWEEEELNGSSLDLGPTADYVFPDLTEKVASMEDPGQAPDLPNLPSILPKMDLAEPPWHMPLQEEEEEEEEEEEEREEEEREKEAEEEEEEEELLPVSGSPGATAQAHAPSPSTSSSTSSQSPGATRHRQEDSGDQATSGMEVESSVKPTLSVPSVTPSTVAPGVQNYSQESGGTEWPTGGLGVQSEVPQGAGEGATVGAADFDGQQGALPSSSLPQTVPPSGTEVPSEGPLYPRIPDSLPPGPQDTESTPSSATWGQEGLSEQPLEGQAAEAHSLTPWDSTQVICKDWSNLAGKSYIILNMTQNIDCEVFRRHRGLRLLALVEEVLPRHRSGHRGDWHISLSKPSEKEQHLLMTLVGEQGVVPTQDVLSMLSGIRRSLEEIGIQNYSTTSSCQARATQVRSDYGTLFVVLVIIGVICFIIIVLGLLYNCWQRRMPKLKHVSHGEELRFVENGCHDNPTLDVASDSQSEMQEKQPSLNGGAINGPSSWSALMGSKRDPEDSDVFEEDTHL.

The signal sequence occupies residues 1-28 (MARPLRAARLPPPLLLLLAAGASLGAYA). The Extracellular portion of the chain corresponds to 29-499 (VGVDEPGPEG…ATQVRSDYGT (471 aa)). Positions 53–92 (FEPLDSEEPSEAMGLDAGLAPGSGFPSEDSEESRLLQPPQ) are disordered. S75 carries an O-linked (Xyl...) (chondroitin sulfate) serine glycan. A Sulfotyrosine modification is found at Y93. N-linked (GlcNAc...) asparagine glycosylation is present at N101. Y113 carries the post-translational modification Sulfotyrosine. Residues 124 to 368 (SMEDPGQAPD…LEGQAAEAHS (245 aa)) are disordered. A compositionally biased stretch (acidic residues) spans 156–187 (QEEEEEEEEEEEEREEEEREKEAEEEEEEEEL). Residues 196-216 (ATAQAHAPSPSTSSSTSSQSP) show a composition bias toward low complexity. Polar residues-rich tracts occupy residues 240-266 (VKPT…QESG), 302-314 (ALPS…TVPP), and 339-349 (DTESTPSSATW). N-linked (GlcNAc...) asparagine glycosylation occurs at N260. A glycan (N-linked (GlcNAc...) asparagine) is linked at N394. Residues 500 to 520 (LFVVLVIIGVICFIIIVLGLL) form a helical membrane-spanning segment. Residues 521–603 (YNCWQRRMPK…SDVFEEDTHL (83 aa)) are Cytoplasmic-facing. Residues 558–570 (DSQSEMQEKQPSL) show a composition bias toward polar residues. Residues 558 to 603 (DSQSEMQEKQPSLNGGAINGPSSWSALMGSKRDPEDSDVFEEDTHL) form a disordered region. Phosphoserine occurs at positions 569 and 594. A compositionally biased stretch (acidic residues) spans 592 to 603 (EDSDVFEEDTHL).

This sequence belongs to the podocalyxin family. Homodimer; disulfide-linked. Interacts with SELL, SELE and SELP. Glycosylated; contains chondroitin sulfate. Displays sialylated O-linked oligosaccharides. Post-translationally, sulfation is necessary for interaction with SELL. Sialylated O-linked oligosaccharides are necessary for interaction with SELL, SELE and SELP.

The protein localises to the membrane. Its function is as follows. Acts as a ligand for vascular selectins. Mediates rapid rolling of leukocytes over vascular surfaces through high affinity divalent cation-dependent interactions with E-, P- and L-selectins. The chain is Podocalyxin-like protein 2 (Podxl2) from Mus musculus (Mouse).